Here is a 63-residue protein sequence, read N- to C-terminus: uncharacterized protein (63 aa).

Positions 1–21 are cleaved as a signal peptide; that stretch reads MYLSLLLILLAWTLWLGNSLA.

This is an uncharacterized protein from Haemophilus influenzae (strain ATCC 51907 / DSM 11121 / KW20 / Rd).